The primary structure comprises 114 residues: Transmembrane protein 14C (114 aa).

4 helical membrane passes run 8-28, 33-53, 63-83, and 89-109; these read LMPL…GGII, AGSV…GLGA, VWVF…RFYN, and PAGL…ISLL.

Belongs to the TMEM14 family.

It is found in the mitochondrion membrane. Functionally, required for normal heme biosynthesis. This Mus musculus (Mouse) protein is Transmembrane protein 14C (Tmem14c).